Consider the following 38-residue polypeptide: CHH precursor-related peptide (38 aa).

Positions 18 to 38 (GALEPSTPLGDLSGSLGHPVE) are disordered.

As to expression, produced by the medulla terminalis X-organ in the eyestalks and transported to the sinus gland where it is stored and released.

It is found in the secreted. This is CHH precursor-related peptide from Cancer pagurus (Rock crab).